Consider the following 601-residue polypeptide: DNA topoisomerase I, mitochondrial (601 aa).

Residues 1-50 (MRVVRLLRLRAALTLLGEVPRRPASRGVPGSRRTQKGSGARWEKEKHEDG) constitute a mitochondrion transit peptide. Residues 22 to 48 (RPASRGVPGSRRTQKGSGARWEKEKHE) are disordered. 3 interaction with DNA regions span residues 261-262 (KY), 324-329 (RAGNEK), and 421-423 (TAK). The region spanning 268–601 (CSKLKGETAW…LAMAGEDFEF (334 aa)) is the Topo IB-type catalytic domain. Tyr-559 (O-(3'-phospho-DNA)-tyrosine intermediate) is an active-site residue.

This sequence belongs to the type IB topoisomerase family. Requires Ca(2+) as cofactor. It depends on Mg(2+) as a cofactor.

The protein resides in the mitochondrion. It carries out the reaction ATP-independent breakage of single-stranded DNA, followed by passage and rejoining.. Its function is as follows. Releases the supercoiling and torsional tension of DNA introduced during duplication of mitochondrial DNA by transiently cleaving and rejoining one strand of the DNA duplex. Introduces a single-strand break via transesterification at a target site in duplex DNA. The scissile phosphodiester is attacked by the catalytic tyrosine of the enzyme, resulting in the formation of a DNA-(3'-phosphotyrosyl)-enzyme intermediate and the expulsion of a 5'-OH DNA strand. The free DNA strand then rotates around the intact phosphodiester bond on the opposing strand, thus removing DNA supercoils. Finally, in the religation step, the DNA 5'-OH attacks the covalent intermediate to expel the active-site tyrosine and restore the DNA phosphodiester backbone. This chain is DNA topoisomerase I, mitochondrial (TOP1MT), found in Pan troglodytes (Chimpanzee).